A 152-amino-acid polypeptide reads, in one-letter code: Snaclec lebecin subunit alpha (152 aa).

A signal peptide spans 1-23 (MGRSISVSFGLLVVFLSLSGTGA). 3 cysteine pairs are disulfide-bonded: Cys-27/Cys-38, Cys-54/Cys-147, and Cys-122/Cys-139. The C-type lectin domain occupies 34–148 (YEGGCYYVFD…CELAYHFICS (115 aa)).

In terms of assembly, heterodimer with the beta subunit (AC W5XCJ6); disulfide-linked. As to expression, expressed by the venom gland.

Its subcellular location is the secreted. Inhibits human breast cancer cells (MDA-MB231) migration and proliferation, as well as their adhesion to fibrinogen and fibronectin. This inhibition may be due to the binding to receptors of the integrin family, probably alpha-v/beta-3 (ITGAV/ITGB3) (40% inhibition of cell adhesion) and alpha-5/beta-1 (ITGA5/ITGB1) (by comparison with lebectin). This is Snaclec lebecin subunit alpha from Macrovipera lebetinus (Levantine viper).